Here is a 468-residue protein sequence, read N- to C-terminus: Probable 1,4-beta-D-glucan cellobiohydrolase C (468 aa).

Residues 1–18 form the signal peptide; it reads MGRVSSLALALLLPAVQA. Positions 19 to 54 constitute a CBM1 domain; the sequence is QQTLWGQCGGIGWTGPTNCVAGAACSTQNPYYAQCL. Intrachain disulfides connect C26–C43 and C37–C53. The segment at 57–106 is thr-rich linker; it reads TATTSTTLTTTTRVTTTTTSTTSKSSSTGSTTTTKSTGTTTTSGSSTTIT. Positions 68-107 are disordered; it reads TRVTTTTTSTTSKSSSTGSTTTTKSTGTTTTSGSSTTITS. Residues 107–468 are catalytic; that stretch reads SAPSGNPFSG…QLLKNANPAF (362 aa). The active site involves D198. Disulfide bonds link C199/C258 and C390/C437. Residue D244 is the Proton donor of the active site. Catalysis depends on D423, which acts as the Nucleophile.

Belongs to the glycosyl hydrolase 6 (cellulase B) family.

It localises to the secreted. The catalysed reaction is Hydrolysis of (1-&gt;4)-beta-D-glucosidic linkages in cellulose and cellotetraose, releasing cellobiose from the non-reducing ends of the chains.. Functionally, the biological conversion of cellulose to glucose generally requires three types of hydrolytic enzymes: (1) Endoglucanases which cut internal beta-1,4-glucosidic bonds; (2) Exocellobiohydrolases that cut the disaccharide cellobiose from the non-reducing end of the cellulose polymer chain; (3) Beta-1,4-glucosidases which hydrolyze the cellobiose and other short cello-oligosaccharides to glucose. In Aspergillus terreus (strain NIH 2624 / FGSC A1156), this protein is Probable 1,4-beta-D-glucan cellobiohydrolase C (cbhC).